A 1624-amino-acid polypeptide reads, in one-letter code: Pappalysin-1 (1624 aa).

The N-terminal stretch at Met1 to Ala22 is a signal peptide. Positions Glu23–Ala81 are excised as a propeptide. The segment at Val28–Ala93 is disordered. The span at Ala42–Ala51 shows a compositional bias: low complexity. 17 disulfides stabilise this stretch: Cys141/Cys232, Cys324/Cys619, Cys329/Cys654, Cys411/Cys425, Cys421/Cys437, Cys454/Cys470, Cys471/Cys482, Cys580/Cys597, Cys584/Cys609, Cys707/Cys875, Cys710/Cys878, Cys750/Cys832, Cys772/Cys778, Cys944/Cys972, Cys957/Cys968, Cys980/Cys987, and Cys996/Cys1008. Residues Arg272 to Pro583 are metalloprotease. N-linked (GlcNAc...) asparagine glycans are attached at residues Asn387 and Asn398. N-linked (GlcNAc...) asparagine glycosylation occurs at Asn426. Asn516 carries an N-linked (GlcNAc...) asparagine glycan. A Zn(2+)-binding site is contributed by His559. Glu560 is a catalytic residue. Zn(2+) contacts are provided by His563 and His569. Residues Asn598, Asn616, and Asn722 are each glycosylated (N-linked (GlcNAc...) asparagine). N-linked (GlcNAc...) asparagine glycosylation occurs at Asn822. The N-linked (GlcNAc...) asparagine glycan is linked to Asn1023. 19 cysteine pairs are disulfide-bonded: Cys1033/Cys1067, Cys1048/Cys1136, Cys1189/Cys1202, Cys1212/Cys1266, Cys1224/Cys1235, Cys1239/Cys1277, Cys1282/Cys1326, Cys1297/Cys1307, Cys1311/Cys1339, Cys1343/Cys1396, Cys1359/Cys1370, Cys1374/Cys1407, Cys1412/Cys1455, Cys1425/Cys1435, Cys1439/Cys1468, Cys1475/Cys1536, Cys1489/Cys1499, Cys1503/Cys1551, and Cys1555/Cys1573. 5 Sushi domains span residues Ala1210–Pro1279, Val1280–Leu1341, Met1342–Pro1409, Val1410–Glu1470, and Gly1473–Lys1553. Residues Asn1219 and Asn1223 are each glycosylated (N-linked (GlcNAc...) asparagine). N-linked (GlcNAc...) asparagine glycosylation is present at Asn1320. The N-linked (GlcNAc...) asparagine glycan is linked to Asn1516.

Belongs to the peptidase M43B family. In terms of assembly, homodimer; disulfide-linked. In pregnancy serum, predominantly found as a disulfide-linked 2:2 heterotetramer with the proform of PRG2. Zn(2+) is required as a cofactor. Detected in kidney, spleen, brain, ovary, breast, skin, prostate, uterus, and placenta.

It localises to the secreted. The catalysed reaction is Cleavage of the 135-Met-|-Lys-136 bond in insulin-like growth factor binding protein (IGFBP)-4, and the 143-Ser-|-Lys-144 bond in IGFBP-5.. Functionally, metalloproteinase which specifically cleaves IGFBP-4 and IGFBP-5, resulting in release of bound IGF. Cleavage of IGFBP-4 is dramatically enhanced by the presence of IGF, whereas cleavage of IGFBP-5 is slightly inhibited by the presence of IGF. Isoform 2 cleaves IGFBP-4 very slowly compared to PAPP-A, but its ability to cleave IGFBP-5 is unaffected. This Mus musculus (Mouse) protein is Pappalysin-1 (Pappa).